Reading from the N-terminus, the 142-residue chain is Large ribosomal subunit protein uL13 (142 aa).

It belongs to the universal ribosomal protein uL13 family. Part of the 50S ribosomal subunit.

In terms of biological role, this protein is one of the early assembly proteins of the 50S ribosomal subunit, although it is not seen to bind rRNA by itself. It is important during the early stages of 50S assembly. This Shigella sonnei (strain Ss046) protein is Large ribosomal subunit protein uL13.